The following is a 451-amino-acid chain: D-inositol 3-phosphate glycosyltransferase (451 aa).

Histidine 37 contributes to the 1D-myo-inositol 3-phosphate binding site. UDP-N-acetyl-alpha-D-glucosamine is bound by residues 43 to 44 (QP) and glycine 51. 1D-myo-inositol 3-phosphate contacts are provided by residues 48–53 (DAGGMN), lysine 106, tyrosine 138, threonine 162, and arginine 182. Arginine 259, lysine 264, and arginine 323 together coordinate UDP-N-acetyl-alpha-D-glucosamine. Mg(2+) is bound by residues tyrosine 332, arginine 333, and alanine 335. Glutamate 345 and glutamate 353 together coordinate UDP-N-acetyl-alpha-D-glucosamine. Threonine 359 is a binding site for Mg(2+).

It belongs to the glycosyltransferase group 1 family. MshA subfamily. As to quaternary structure, homodimer.

It carries out the reaction 1D-myo-inositol 3-phosphate + UDP-N-acetyl-alpha-D-glucosamine = 1D-myo-inositol 2-acetamido-2-deoxy-alpha-D-glucopyranoside 3-phosphate + UDP + H(+). Its function is as follows. Catalyzes the transfer of a N-acetyl-glucosamine moiety to 1D-myo-inositol 3-phosphate to produce 1D-myo-inositol 2-acetamido-2-deoxy-glucopyranoside 3-phosphate in the mycothiol biosynthesis pathway. This chain is D-inositol 3-phosphate glycosyltransferase, found in Corynebacterium kroppenstedtii (strain DSM 44385 / JCM 11950 / CIP 105744 / CCUG 35717).